Consider the following 326-residue polypeptide: Undecaprenyl-phosphate 4-deoxy-4-formamido-L-arabinose transferase (326 aa).

Transmembrane regions (helical) follow at residues 236–256 (LSVVGSVIAVAGFLLAVLLIV) and 270–290 (VFTLFAILFMFIGAQFVAMGL).

It belongs to the glycosyltransferase 2 family.

The protein localises to the cell inner membrane. The enzyme catalyses UDP-4-deoxy-4-formamido-beta-L-arabinose + di-trans,octa-cis-undecaprenyl phosphate = 4-deoxy-4-formamido-alpha-L-arabinopyranosyl di-trans,octa-cis-undecaprenyl phosphate + UDP. Its pathway is glycolipid biosynthesis; 4-amino-4-deoxy-alpha-L-arabinose undecaprenyl phosphate biosynthesis; 4-amino-4-deoxy-alpha-L-arabinose undecaprenyl phosphate from UDP-4-deoxy-4-formamido-beta-L-arabinose and undecaprenyl phosphate: step 1/2. It functions in the pathway bacterial outer membrane biogenesis; lipopolysaccharide biosynthesis. Catalyzes the transfer of 4-deoxy-4-formamido-L-arabinose from UDP to undecaprenyl phosphate. The modified arabinose is attached to lipid A and is required for resistance to polymyxin and cationic antimicrobial peptides. This is Undecaprenyl-phosphate 4-deoxy-4-formamido-L-arabinose transferase from Proteus mirabilis (strain HI4320).